A 429-amino-acid polypeptide reads, in one-letter code: Ribosomal RNA small subunit methyltransferase B (429 aa).

Residues Cys254 to Lys260, Asp277, Asp303, and Asp322 contribute to the S-adenosyl-L-methionine site. Cys375 acts as the Nucleophile in catalysis. Residues Ala397 to Asp419 form a disordered region. Residues Glu400–Leu412 show a composition bias toward polar residues.

The protein belongs to the class I-like SAM-binding methyltransferase superfamily. RsmB/NOP family.

The protein resides in the cytoplasm. The enzyme catalyses cytidine(967) in 16S rRNA + S-adenosyl-L-methionine = 5-methylcytidine(967) in 16S rRNA + S-adenosyl-L-homocysteine + H(+). Functionally, specifically methylates the cytosine at position 967 (m5C967) of 16S rRNA. This chain is Ribosomal RNA small subunit methyltransferase B, found in Salmonella dublin (strain CT_02021853).